The chain runs to 141 residues: Hemoglobin subunit alpha (141 aa).

Residues 1–141 (VLSAADKTNV…VSTVLTSKYR (141 aa)) form the Globin domain. The residue at position 3 (serine 3) is a Phosphoserine. Lysine 7 bears the N6-succinyllysine mark. Threonine 8 carries the phosphothreonine modification. N6-succinyllysine is present on lysine 11. N6-acetyllysine; alternate is present on lysine 16. Residue lysine 16 is modified to N6-succinyllysine; alternate. Serine 35 is modified (phosphoserine). Lysine 40 carries the N6-succinyllysine modification. At serine 49 the chain carries Phosphoserine. Position 58 (histidine 58) interacts with O2. A heme b-binding site is contributed by histidine 87. Serine 102 is subject to Phosphoserine. The residue at position 108 (threonine 108) is a Phosphothreonine. Phosphoserine occurs at positions 124 and 131. A phosphothreonine mark is found at threonine 134 and threonine 137. Serine 138 bears the Phosphoserine mark.

It belongs to the globin family. In terms of assembly, heterotetramer of two alpha chains and two beta chains. Red blood cells.

Functionally, involved in oxygen transport from the lung to the various peripheral tissues. The sequence is that of Hemoglobin subunit alpha from Sciurus carolinensis (Eastern gray squirrel).